The primary structure comprises 94 residues: Small ribosomal subunit protein uS17 (94 aa).

Residues 1–22 (MASSSTEGQAAARGRKKSWTGK) are disordered.

The protein belongs to the universal ribosomal protein uS17 family. Part of the 30S ribosomal subunit.

Its function is as follows. One of the primary rRNA binding proteins, it binds specifically to the 5'-end of 16S ribosomal RNA. The protein is Small ribosomal subunit protein uS17 of Chlorobium luteolum (strain DSM 273 / BCRC 81028 / 2530) (Pelodictyon luteolum).